The chain runs to 151 residues: Aspartate carbamoyltransferase regulatory chain (151 aa).

Residues cysteine 107, cysteine 112, cysteine 135, and cysteine 138 each coordinate Zn(2+).

The protein belongs to the PyrI family. In terms of assembly, contains catalytic and regulatory chains. Zn(2+) is required as a cofactor.

Involved in allosteric regulation of aspartate carbamoyltransferase. In Thermococcus gammatolerans (strain DSM 15229 / JCM 11827 / EJ3), this protein is Aspartate carbamoyltransferase regulatory chain.